Consider the following 108-residue polypeptide: UPF0251 protein PF0620 (108 aa).

This sequence belongs to the UPF0251 family.

This Pyrococcus furiosus (strain ATCC 43587 / DSM 3638 / JCM 8422 / Vc1) protein is UPF0251 protein PF0620.